Consider the following 286-residue polypeptide: Nucleotide-binding protein HCH_05324 (286 aa).

Residue 8 to 15 (GRSGSGKS) coordinates ATP. GTP is bound at residue 60–63 (DARN).

Belongs to the RapZ-like family.

In terms of biological role, displays ATPase and GTPase activities. The chain is Nucleotide-binding protein HCH_05324 from Hahella chejuensis (strain KCTC 2396).